Here is a 186-residue protein sequence, read N- to C-terminus: MTIAEIKNTVEGKMDQSIEAFKHNLTKIRTGRANPALLDTVHVDYYGAMLPISQVANVSLLDARTISVQPWEKGMGAKIEKAIRDSDLGLNPSSMGDLIRVPMPAMSEERRKELSKVVRGEGEGAKIAIRNLRRDANEAIRKAVKDKLASEDEQKRCETDIQKVTDRHVIVIDQLVAAKEQDIMAV.

This sequence belongs to the RRF family.

It is found in the cytoplasm. In terms of biological role, responsible for the release of ribosomes from messenger RNA at the termination of protein biosynthesis. May increase the efficiency of translation by recycling ribosomes from one round of translation to another. The sequence is that of Ribosome-recycling factor from Albidiferax ferrireducens (strain ATCC BAA-621 / DSM 15236 / T118) (Rhodoferax ferrireducens).